A 391-amino-acid polypeptide reads, in one-letter code: Lysophosphatidylinositol acyltransferase 10 (391 aa).

The next 5 helical transmembrane spans lie at 10–30 (LLGW…NYII), 52–72 (AISY…GVRI), 97–119 (WMYM…KISL), 323–343 (LTSL…IFFV), and 347–367 (QLGF…YGGI).

This sequence belongs to the 1-acyl-sn-glycerol-3-phosphate acyltransferase family. In terms of tissue distribution, expressed in seam cells, vulval epithelial cells and the major epithelial syncytium hyp7, and in several head neurons including AIY interneurons.

It localises to the endoplasmic reticulum membrane. The enzyme catalyses a 2-acyl-sn-glycero-3-phospho-D-myo-inositol + an acyl-CoA = a 1,2-diacyl-sn-glycero-3-phospho-(1D-myo-inositol) + CoA. The catalysed reaction is a 2-acyl-sn-glycero-3-phospho-D-myo-inositol + octadecanoyl-CoA = 1-octadecanoyl-2-acyl-sn-glycero-3-phospho-1D-myo-inositol + CoA. It functions in the pathway phospholipid metabolism; phosphatidylinositol metabolism. Acyltransferase required for the fatty acid remodeling of phosphatidylinositol (1,2-diacyl-sn-glycero-3-phosphoinositol or PI). Mediates the conversion of lysophosphatidylinositol (2-acylglycerophosphatidylinositol or LPI) into PI (LPIAT activity). Has preference for saturated and mono-unsaturated fatty acids as acyl donors and sn-2-acyl lysoPI (2-acyl-sn-glycero-3-phospho-D-myo-inositol) as acyl acceptor. Contributes to the asymmetric cell division of epithelial cells. Asymmetric cell division is the fundamental mechanism by which multicellular organisms generate cell diversity. The protein is Lysophosphatidylinositol acyltransferase 10 of Caenorhabditis elegans.